The sequence spans 393 residues: N-acyl-phosphatidylethanolamine-hydrolyzing phospholipase D (393 aa).

N-acetylmethionine is present on methionine 1. A compositionally biased stretch (polar residues) spans 1–16 (MDENESNQSLMTSSQY). Residues 1 to 40 (MDENESNQSLMTSSQYPKEAVRKRQNSARNSGASDSSRFS) form a disordered region. Zn(2+) contacts are provided by histidine 185 and histidine 187. Tyrosine 188 is a binding site for an N-acyl-1,2-diacyl-sn-glycero-3-phosphoethanolamine. Aspartate 189, histidine 190, and histidine 253 together coordinate Zn(2+). 2 residues coordinate deoxycholate: lysine 256 and methionine 260. Residue aspartate 284 coordinates Zn(2+). Histidine 321 is a binding site for an N-acyl-1,2-diacyl-sn-glycero-3-phosphoethanolamine. Zn(2+) is bound at residue histidine 343. Residue alanine 348 participates in deoxycholate binding.

Belongs to the NAPE-PLD family. Homodimer. Bile acids promote the assembly of inactive monomers into an active dimer and enable catalysis. It depends on Zn(2+) as a cofactor. In terms of tissue distribution, widely expressed. Highest expression in brain, kidney and testis (at protein level). Expressed in adipose tissue (at protein level).

The protein resides in the golgi apparatus membrane. It is found in the early endosome membrane. It localises to the nucleus envelope. The protein localises to the nucleus. Its subcellular location is the nucleoplasm. It carries out the reaction an N-acyl-1,2-diacyl-sn-glycero-3-phosphoethanolamine + H2O = an N-acylethanolamine + a 1,2-diacyl-sn-glycero-3-phosphate + H(+). The enzyme catalyses N-butanoyl-1-hexadecanoyl-2-(9Z,12Z-octadecadienoyl)-sn-glycero-3-phosphoethanolamine + H2O = N-butanoyl ethanolamine + 1-hexadecanoyl-2-(9Z,12Z-octadecadienoyl)-sn-glycero-3-phosphate + H(+). It catalyses the reaction N-hexanoyl-1-hexadecanoyl-2-(9Z,12Z-octadecadienoyl)-sn-glycero-3-phosphoethanolamine + H2O = N-hexanoyl ethanolamine + 1-hexadecanoyl-2-(9Z,12Z-octadecadienoyl)-sn-glycero-3-phosphate + H(+). The catalysed reaction is N-octanoyl-1-hexadecanoyl-2-(9Z,12Z-octadecadienoyl)-sn-glycero-3-phosphoethanolamine + H2O = N-octanoyl ethanolamine + 1-hexadecanoyl-2-(9Z,12Z-octadecadienoyl)-sn-glycero-3-phosphate + H(+). It carries out the reaction N-decanoyl-1-hexadecanoyl-2-(9Z,12Z-octadecadienoyl)-sn-glycero-3-phosphoethanolamine + H2O = N-decanoyl ethanolamine + 1-hexadecanoyl-2-(9Z,12Z-octadecadienoyl)-sn-glycero-3-phosphate + H(+). The enzyme catalyses N-dodecanoyl-1,2-di-(9Z-octadecenoyl)-sn-glycero-3-phosphoethanolamine + H2O = N-dodecanoylethanolamine + 1,2-di-(9Z-octadecenoyl)-sn-glycero-3-phosphate + H(+). It catalyses the reaction N-tetradecanoyl-1,2-di-(9Z-octadecenoyl)-sn-glycero-3-phosphoethanolamine + H2O = N-tetradecanoylethanolamine + 1,2-di-(9Z-octadecenoyl)-sn-glycero-3-phosphate + H(+). The catalysed reaction is N-hexadecanoyl-1,2-di-(9Z-octadecenoyl)-sn-glycero-3-phosphoethanolamine + H2O = N-hexadecanoylethanolamine + 1,2-di-(9Z-octadecenoyl)-sn-glycero-3-phosphate + H(+). It carries out the reaction N,1-dihexadecanoyl-2-(9Z,12Z-octadecadienoyl)-sn-glycero-3-phosphoethanolamine + H2O = 1-hexadecanoyl-2-(9Z,12Z-octadecadienoyl)-sn-glycero-3-phosphate + N-hexadecanoylethanolamine + H(+). The enzyme catalyses N-octadecanoyl-1,2-di-(9Z-octadecenoyl)-sn-glycero-3-phosphoethanolamine + H2O = N-octadecanoyl ethanolamine + 1,2-di-(9Z-octadecenoyl)-sn-glycero-3-phosphate + H(+). It catalyses the reaction N,1,2-tri-(9Z-octadecenoyl)-sn-glycero-3-phosphoethanolamine + H2O = N-(9Z-octadecenoyl) ethanolamine + 1,2-di-(9Z-octadecenoyl)-sn-glycero-3-phosphate + H(+). The catalysed reaction is N-(5Z,8Z,11Z,14Z-eicosatetraenoyl)-1,2-diacyl-sn-glycero-3-phosphoethanolamine + H2O = N-(5Z,8Z,11Z,14Z-eicosatetraenoyl)-ethanolamine + a 1,2-diacyl-sn-glycero-3-phosphate + H(+). It carries out the reaction N-(5Z,8Z,11Z,14Z-eicosatetraenoyl)-1,2-di-(9Z-octadecenoyl)-sn-glycero-3-phosphoethanolamine + H2O = N-(5Z,8Z,11Z,14Z-eicosatetraenoyl)-ethanolamine + 1,2-di-(9Z-octadecenoyl)-sn-glycero-3-phosphate + H(+). The enzyme catalyses 1-O-(1Z-octadecenoyl)-2-(9Z-octadecenoyl)-sn-glycero-3-phospho-N-hexadecanoyl-ethanolamine + H2O = 1-O-(1Z-octadecenoyl)-2-(9Z-octadecenoyl)-sn-glycero-3-phosphate + N-hexadecanoylethanolamine + H(+). It catalyses the reaction N,1-diacyl-sn-glycero-3-phosphoethanolamine + H2O = an N-acylethanolamine + a 1-acyl-sn-glycero-3-phosphate + H(+). The catalysed reaction is N,1-dihexadecanoyl-sn-glycero-3-phosphoethanolamine + H2O = N-hexadecanoylethanolamine + 1-hexadecanoyl-sn-glycero-3-phosphate + H(+). It carries out the reaction N-(5Z,8Z,11Z,14Z-eicosatetraenoyl)-1-(9Z-octadecenoyl)-sn-glycero-3-phosphoethanolamine + H2O = N-(5Z,8Z,11Z,14Z-eicosatetraenoyl)-ethanolamine + 1-(9Z-octadecenoyl)-sn-glycero-3-phosphate + H(+). Its activity is regulated as follows. Activated by divalent cations. Activated by bile acids and their conjugates, except for lithocholic acid which is rather inhibitory. Binding of deoxycholic acid favors the selective release of anandamide and likely other unsatured long FAEs. Inhibited by phosphatidylethanolamines. D-type phospholipase that hydrolyzes N-acyl-phosphatidylethanolamines (NAPEs) to produce bioactive N-acylethanolamines/fatty acid ethanolamides (NAEs/FAEs) and phosphatidic acid. Cleaves the terminal phosphodiester bond of diacyl- and alkenylacyl-NAPEs, primarily playing a role in the generation of long-chain saturated and monounsaturated NAEs in the brain. May control NAPE homeostasis in dopaminergic neuron membranes and regulate neuron survival, partly through RAC1 activation. As a regulator of lipid metabolism in the adipose tissue, mediates the crosstalk between adipocytes, gut microbiota and immune cells to control body temperature and weight. In particular, regulates energy homeostasis by promoting cold-induced brown or beige adipocyte differentiation program to generate heat from fatty acids and glucose. Has limited D-type phospholipase activity toward N-acyl lyso-NAPEs. The sequence is that of N-acyl-phosphatidylethanolamine-hydrolyzing phospholipase D (NAPEPLD) from Homo sapiens (Human).